The primary structure comprises 737 residues: Dipeptidyl peptidase 3 (737 aa).

N-acetylalanine is present on Ala-2. Residue His-450 coordinates Zn(2+). Glu-451 is a catalytic residue. Residues His-455 and Glu-508 each coordinate Zn(2+).

Belongs to the peptidase M49 family. Requires Zn(2+) as cofactor. Detected in placenta (at protein level). Detected in erythrocytes (at protein level).

The protein resides in the cytoplasm. The protein localises to the cytosol. It catalyses the reaction Release of an N-terminal dipeptide from a peptide comprising four or more residues, with broad specificity. Also acts on dipeptidyl 2-naphthylamides.. Activated by Co(2+). Inhibited by EDTA and o-phenanthroline (in vitro). Cleaves and degrades bioactive peptides, including angiotensin, Leu-enkephalin and Met-enkephalin. Also cleaves Arg-Arg-beta-naphthylamide (in vitro). The sequence is that of Dipeptidyl peptidase 3 (DPP3) from Homo sapiens (Human).